Here is a 549-residue protein sequence, read N- to C-terminus: MATPRGLGALLLLLLLPTSGQEKPTEGPRNTCLGSNNMYDIFNLNDKALCFTKCRQSGSDSCNVENLQRYWLNYEAHLMKEGLTQKVNTPFLKALVQNLSTNTAEDFYFSLEPSQVPRQVMKDEDKPPDRVRLPKSLFRSLPGNRSVVRLAVTILDIGPGTLFKGPRLGLGDGSGVLNNRLVGLSVGQMHVTKLAEPLEIVFSHQRPPPNMTLTCVFWDVTKGTTGDWSSEGCSTEVRPEGTVCCCDHLTFFALLLRPTLDQSTVHILTRISQAGCGVSMIFLAFTIILYAFLRLSRERFKSEDAPKIHVALGGSLFLLNLAFLVNVGSGSKGSDAACWARGAVFHYFLLCAFTWMGLEAFHLYLLAVRVFNTYFGHYFLKLSLVGWGLPALMVIGTGSANSYGLYTIRDRENRTSLELCWFREGTTMYALYITVHGYFLITFLFGMVVLALVVWKIFTLSRATAVKERGKNRKKVLTLLGLSSLVGVTWGLAIFTPLGLSTVYIFALFNSLQGVFICCWFTILYLPSQSTTVSSSTARLDQAHSASQE.

An N-terminal signal peptide occupies residues 1–20; sequence MATPRGLGALLLLLLLPTSG. At 21-270 the chain is on the extracellular side; the sequence is QEKPTEGPRN…DQSTVHILTR (250 aa). Asn-98, Asn-144, and Asn-210 each carry an N-linked (GlcNAc...) asparagine glycan. Residues 107–262 enclose the GAIN-B domain; that stretch reads FYFSLEPSQV…ALLLRPTLDQ (156 aa). Disulfide bonds link Cys-215-Cys-244 and Cys-233-Cys-246. Residues 215-262 form a GPS region; that stretch reads CVFWDVTKGTTGDWSSEGCSTEVRPEGTVCCCDHLTFFALLLRPTLDQ. The stachel stretch occupies residues 251–259; it reads FFALLLRPT. The helical transmembrane segment at 271 to 295 threads the bilayer; it reads ISQAGCGVSMIFLAFTIILYAFLRL. Residues 296–304 are Cytoplasmic-facing; the sequence is SRERFKSED. A helical transmembrane segment spans residues 305–326; sequence APKIHVALGGSLFLLNLAFLVN. The Extracellular portion of the chain corresponds to 327-338; that stretch reads VGSGSKGSDAAC. A disulfide bond links Cys-338 and Cys-420. The helical transmembrane segment at 339 to 364 threads the bilayer; it reads WARGAVFHYFLLCAFTWMGLEAFHLY. The Cytoplasmic portion of the chain corresponds to 365-378; sequence LLAVRVFNTYFGHY. The chain crosses the membrane as a helical span at residues 379–400; that stretch reads FLKLSLVGWGLPALMVIGTGSA. Residues 401–428 lie on the Extracellular side of the membrane; that stretch reads NSYGLYTIRDRENRTSLELCWFREGTTM. Asn-413 is a glycosylation site (N-linked (GlcNAc...) asparagine). Residues 429–454 form a helical membrane-spanning segment; sequence YALYITVHGYFLITFLFGMVVLALVV. The Cytoplasmic portion of the chain corresponds to 455–474; the sequence is WKIFTLSRATAVKERGKNRK. The helical transmembrane segment at 475 to 495 threads the bilayer; the sequence is KVLTLLGLSSLVGVTWGLAIF. Topologically, residues 496-501 are extracellular; that stretch reads TPLGLS. The chain crosses the membrane as a helical span at residues 502-525; sequence TVYIFALFNSLQGVFICCWFTILY. Residue Asn-510 participates in cortisol binding. At 526 to 549 the chain is on the cytoplasmic side; sequence LPSQSTTVSSSTARLDQAHSASQE.

The protein belongs to the G-protein coupled receptor 2 family. Adhesion G-protein coupled receptor (ADGR) subfamily. Heterodimer of 2 chains generated by proteolytic processing; the large extracellular N-terminal fragment and the membrane-bound C-terminal fragment predominantly remain associated and non-covalently linked. Interacts with PRTN3; this interaction induces the activation of PAR2. Interacts with GNAO1 (when palmitoylated). In terms of processing, autoproteolytically processed at the GPS region of the GAIN-B domain; this cleavage modulates receptor activity. O- and N-glycosylated. As to expression, expressed in cultured primary dermal lymphatic endothelial cells. Highly expressed in polymorphonuclear cells (PMNs) including neutrophilic, eosinophilic, and basophilic granulocytes.

The protein localises to the cell membrane. Its activity is regulated as follows. Forms a heterodimer of 2 chains generated by proteolytic processing that remain associated through non-covalent interactions mediated by the GAIN-B domain. In the inactivated receptor, the Stachel sequence (also named stalk) is embedded in the GAIN-B domain, where it adopts a beta-strand conformation. On activation, the Stachel moves into the 7 transmembrane region and adopts a twisted hook-shaped configuration that forms contacts within the receptor, leading to coupling of a G-alpha protein, which activates signaling. The cleaved GAIN-B and N-terminal domains can then dissociate from the rest of the receptor. Its function is as follows. Adhesion G-protein coupled receptor (aGPCR) for glucocorticoid hormones such as cortisol, cortisone and 11-deoxycortisol. Ligand binding causes a conformation change that triggers signaling via guanine nucleotide-binding proteins (G proteins) and modulates the activity of downstream effectors, such as adenylate cyclase. ADGRG3/GPR97 is coupled to G(o)/GNAO1 G proteins and mediates signaling by inhibiting adenylate cyclase activity. May also signal through G-alpha(q)-proteins; additional evidence are however required to confirm this result in vivo. Plays a role in the regulation of various processes including B-cell development, inflammation or innate immunity. Regulates migration of lymphatic endothelial cells in vitro via the small GTPases RhoA and CDC42. Antibody ligation leads to the production and activation of antimicrobial mediators like reactive oxygen species (ROS) and myeloperoxidase (MPO) as well as enhanced bacteria uptake and killing by granulocytes. Additionally, collaborates with protease-activated receptor 2/PAR2 to stimulate neutrophil-driven antimicrobial responses and endothelial cell activation. The polypeptide is Adhesion G protein-coupled receptor G3 (Homo sapiens (Human)).